A 446-amino-acid polypeptide reads, in one-letter code: Enolase 1 (446 aa).

The substrate site is built by His164 and Glu173. The active-site Proton donor is Glu216. The Mg(2+) site is built by Asp251, Glu302, and Asp329. Glu302 and Asp329 together coordinate substrate. Catalysis depends on Lys354, which acts as the Proton acceptor. Residues 381-384 and Lys405 each bind substrate; that span reads SHRS.

This sequence belongs to the enolase family. Homodimer. It depends on Mg(2+) as a cofactor.

The protein resides in the cytoplasm. The catalysed reaction is (2R)-2-phosphoglycerate = phosphoenolpyruvate + H2O. It participates in carbohydrate degradation; glycolysis; pyruvate from D-glyceraldehyde 3-phosphate: step 4/5. The sequence is that of Enolase 1 (ENO1) from Zea mays (Maize).